The chain runs to 81 residues: MTMSLEVFEKLESKVQQAIDTITLLQMEIEELKEKNNTLVQEVQSAQHGREELERENSQLKEQQQGWQERLQALLGRMEEV.

Residues 5 to 81 adopt a coiled-coil conformation; the sequence is LEVFEKLESK…QALLGRMEEV (77 aa). The tract at residues 43–64 is disordered; that stretch reads VQSAQHGREELERENSQLKEQQ. Residues 48–59 are compositionally biased toward basic and acidic residues; it reads HGREELERENSQ.

This sequence belongs to the ZapB family. As to quaternary structure, homodimer. The ends of the coiled-coil dimer bind to each other, forming polymers. Interacts with FtsZ.

Its subcellular location is the cytoplasm. In terms of biological role, non-essential, abundant cell division factor that is required for proper Z-ring formation. It is recruited early to the divisome by direct interaction with FtsZ, stimulating Z-ring assembly and thereby promoting cell division earlier in the cell cycle. Its recruitment to the Z-ring requires functional FtsA or ZipA. The protein is Cell division protein ZapB of Klebsiella pneumoniae subsp. pneumoniae (strain ATCC 700721 / MGH 78578).